Reading from the N-terminus, the 508-residue chain is Phenylalanine--tRNA ligase alpha subunit (508 aa).

An N-acetylalanine modification is found at Ala-2. Position 190 is a phosphothreonine (Thr-190). Ser-193 and Ser-301 each carry phosphoserine. The residue at position 311 (Lys-311) is an N6-acetyllysine. Residues Thr-329, 372–374 (QIE), and Tyr-412 contribute to the L-phenylalanine site. Glu-414 provides a ligand contact to Mg(2+). Phe-438 is a binding site for L-phenylalanine.

This sequence belongs to the class-II aminoacyl-tRNA synthetase family. Phe-tRNA synthetase alpha subunit type 2 subfamily. Heterotetramer; dimer of two heterodimers formed by FARSA and FARSB. It depends on Mg(2+) as a cofactor.

Its subcellular location is the cytoplasm. The catalysed reaction is tRNA(Phe) + L-phenylalanine + ATP = L-phenylalanyl-tRNA(Phe) + AMP + diphosphate + H(+). The polypeptide is Phenylalanine--tRNA ligase alpha subunit (FARSA) (Pongo abelii (Sumatran orangutan)).